The sequence spans 767 residues: GPI ethanolamine phosphate transferase 2 (767 aa).

2 N-linked (GlcNAc...) asparagine glycosylation sites follow: Asn186 and Asn401. The next 2 helical transmembrane spans lie at 407–427 and 434–454; these read LGLF…YGLG and VTFL…SSYV. Asn490 carries N-linked (GlcNAc...) asparagine glycosylation. The next 3 helical transmembrane spans lie at 513 to 533, 538 to 558, and 595 to 615; these read ILWA…CLNS, IWRS…LVFV, and IPIF…KMSA. N-linked (GlcNAc...) asparagine glycosylation is present at Asn627. Helical transmembrane passes span 655 to 675, 695 to 715, and 733 to 755; these read SVVL…IWWA, TLLT…CTML, and LAWT…SQVL.

It belongs to the PIGG/PIGN/PIGO family. PIGG subfamily.

The protein localises to the endoplasmic reticulum membrane. It participates in glycolipid biosynthesis; glycosylphosphatidylinositol-anchor biosynthesis. In terms of biological role, ethanolamine phosphate transferase involved in glycosylphosphatidylinositol-anchor biosynthesis. Transfers ethanolamine phosphate to the GPI second mannose. The protein is GPI ethanolamine phosphate transferase 2 (las21) of Aspergillus fumigatus (strain ATCC MYA-4609 / CBS 101355 / FGSC A1100 / Af293) (Neosartorya fumigata).